The following is a 294-amino-acid chain: UPF0761 membrane protein YPK_4186 (294 aa).

7 consecutive transmembrane segments (helical) span residues L44–F64, I67–I87, G108–W128, L136–A156, V185–V205, A212–M232, and V246–L266.

Belongs to the UPF0761 family.

The protein localises to the cell inner membrane. In Yersinia pseudotuberculosis serotype O:3 (strain YPIII), this protein is UPF0761 membrane protein YPK_4186.